The sequence spans 248 residues: Triosephosphate isomerase (248 aa).

K12 is a substrate binding site. H94 (electrophile) is an active-site residue. The active-site Proton acceptor is E165.

Belongs to the triosephosphate isomerase family. In terms of assembly, homodimer.

The enzyme catalyses D-glyceraldehyde 3-phosphate = dihydroxyacetone phosphate. It participates in carbohydrate biosynthesis; gluconeogenesis. It functions in the pathway carbohydrate degradation; glycolysis; D-glyceraldehyde 3-phosphate from glycerone phosphate: step 1/1. In Bombyx mori (Silk moth), this protein is Triosephosphate isomerase (Tpi).